The sequence spans 552 residues: Protein psiB (552 aa).

The N-terminal stretch at 1–18 (MKLLSVLITFLLATVIYS) is a signal peptide. Asn-60 carries N-linked (GlcNAc...) asparagine glycosylation. The 142-residue stretch at 114–255 (TYDTTRNIYV…EDYCGVCQGD (142 aa)) folds into the PA14 domain. N-linked (GlcNAc...) asparagine glycosylation is found at Asn-281, Asn-313, Asn-340, Asn-365, Asn-446, Asn-472, and Asn-521.

This sequence belongs to the prespore-cell-inducing factor family.

The protein resides in the secreted. This Dictyostelium discoideum (Social amoeba) protein is Protein psiB (psiB).